The primary structure comprises 486 residues: MNGAKRRKVAQDTPRNTKPVAQEKPARAEPKPSSDEESEEESATLEEPSAEETAVDAPKKTFKDLGVNDALCEACEKLNYKYPTPIQEKSIPVALQGRDIIGLAETGSGKTAAFALPVLQALLDKPQPLFGLVLAPTRELATQIGQAFEALGSLISLRCAVIVGGLDMVPQAIALGKKPHIVVATPGRLVDHLEKTKGFSLRTLKYLIMDEADRLLDMDFGPSIDKILKFVPRERRTYLFSATISSKIESLQRASLRDPVKVSISSNKYQTVSTLLQNYLFIPHPQKDVHLIYLINEHAGQSTIVFTRTVWETQRVSILLRTLGFGAIPLHGQLSQSSRLGALNKFRSGTRDILVATDVAARGLDIPSVDVVLNYDLPQDSKTYIHRVGRTARAGKSGVAISLVTQYDLEIYLRIEAALGKKLAEYPTEKEEVMAFQSRVEEAQRIARIEMKSFTEERGKKGSTLKGGRGKKGGKRGRDDMDREEG.

A disordered region spans residues 1-58 (MNGAKRRKVAQDTPRNTKPVAQEKPARAEPKPSSDEESEEESATLEEPSAEETAVDAP). The span at 24 to 34 (KPARAEPKPSS) shows a compositional bias: basic and acidic residues. Residues 35–54 (DEESEEESATLEEPSAEETA) show a composition bias toward acidic residues. The Q motif signature appears at 60 to 88 (KTFKDLGVNDALCEACEKLNYKYPTPIQE). The Helicase ATP-binding domain occupies 91-262 (IPVALQGRDI…RASLRDPVKV (172 aa)). 104–111 (AETGSGKT) is an ATP binding site. The DEAD box signature appears at 210-213 (DEAD). Residues 286-434 (QKDVHLIYLI…EYPTEKEEVM (149 aa)) enclose the Helicase C-terminal domain. Composition is skewed to basic and acidic residues over residues 451–460 (MKSFTEERGK) and 476–486 (RGRDDMDREEG). The segment at 451–486 (MKSFTEERGKKGSTLKGGRGKKGGKRGRDDMDREEG) is disordered.

This sequence belongs to the DEAD box helicase family. DDX47/RRP3 subfamily. As to quaternary structure, interacts with the SSU processome.

Its subcellular location is the nucleus. The enzyme catalyses ATP + H2O = ADP + phosphate + H(+). ATP-dependent rRNA helicase required for pre-ribosomal RNA processing. Involved in the maturation of the 35S-pre-rRNA and to its cleavage to mature 18S rRNA. The chain is ATP-dependent rRNA helicase RRP3 from Gibberella zeae (strain ATCC MYA-4620 / CBS 123657 / FGSC 9075 / NRRL 31084 / PH-1) (Wheat head blight fungus).